A 608-amino-acid polypeptide reads, in one-letter code: MRKLIFMALLMSLLFIGTVFGYGDNGPLYVAYYEKYNITGNTTGDGLVSSTIESITGYIVINNTGTTINDTLYDVWVAVNISNNITGPEVYVNGTPKGVFIESSAPAYTNLPNANTYIHIPILPNNSYVIIKFAIDKSITGVPLIINETYSDTKIPSERLSNWSVYLNISRNVSALPATDTPVSVIMTKYLSNDPNNYGSDTWNFLNITGAIANEGSITLWDGPYFLPGYNDSLTWTGVVINTTKNATITINITGNNTYTNRTGTLMKYGFAVIFFEFNGTKSGTKIEGIYATGYGGVSATKEGPFLNASSGKYEIWYESANVSNKASSYYFNLTHVTIWAVNGSNPVILDPFNITLLIPNSKQTSSPNEILSPGSVWSSTKYAFTFDGIPVVWANCTFKVADENITLINRSINEYSTKYGSSYVVVEEIYVVGSYLIKVTKHIVPDADGTYDIYIVVENIGSVKTPEYVYVYDLIPKNFTVSDEWVNQSSMLIAEGNHTITTNPRYNLSMWWALHAIYPGADGDGNWNDTAEILANKTVVIHYKLNGTGEFYPSDAFIVGIDPTNSLLPTTSPKITTVAGTVENNSEPFLALLTLLVGLGIIIRRVM.

The helical transmembrane segment at 4–24 threads the bilayer; it reads LIFMALLMSLLFIGTVFGYGD.

This sequence to M.jannaschii MJ1394 and A.fulgidus AF2028.

The protein resides in the membrane. This is an uncharacterized protein from Methanocaldococcus jannaschii (strain ATCC 43067 / DSM 2661 / JAL-1 / JCM 10045 / NBRC 100440) (Methanococcus jannaschii).